Consider the following 227-residue polypeptide: ATP-dependent dethiobiotin synthetase BioD (227 aa).

Residue Asp-13–Tyr-18 coordinates ATP. Thr-17 contacts Mg(2+). The active site involves Lys-38. Residue Ser-42 participates in substrate binding. ATP is bound by residues Asp-55, Glu-116–Gly-119, and Asn-179–Asn-180. The Mg(2+) site is built by Asp-55 and Glu-116.

This sequence belongs to the dethiobiotin synthetase family. As to quaternary structure, homodimer. The cofactor is Mg(2+).

It localises to the cytoplasm. It carries out the reaction (7R,8S)-7,8-diammoniononanoate + CO2 + ATP = (4R,5S)-dethiobiotin + ADP + phosphate + 3 H(+). It functions in the pathway cofactor biosynthesis; biotin biosynthesis; biotin from 7,8-diaminononanoate: step 1/2. In terms of biological role, catalyzes a mechanistically unusual reaction, the ATP-dependent insertion of CO2 between the N7 and N8 nitrogen atoms of 7,8-diaminopelargonic acid (DAPA, also called 7,8-diammoniononanoate) to form a ureido ring. The protein is ATP-dependent dethiobiotin synthetase BioD of Clostridium botulinum (strain Loch Maree / Type A3).